A 698-amino-acid chain; its full sequence is Na(+)/H(+) antiporter NhaS5 (698 aa).

12 helical membrane-spanning segments follow: residues 10-30, 35-55, 65-85, 100-120, 121-141, 156-176, 184-204, 222-242, 275-295, 300-320, 333-353, and 370-390; these read SNPL…PPIF, LPGL…GLGV, LFTD…IDMV, LTFA…GYSF, NASV…YPIV, IGAT…CISI, AGLV…LIGF, QFLF…LINV, LFIP…AFLV, LFPL…VAAI, GLTM…AAVA, and VLNT…LMTA.

It belongs to the monovalent cation:proton antiporter 2 (CPA2) transporter (TC 2.A.37) family.

Its subcellular location is the membrane. Its function is as follows. Na(+)/H(+) antiporter. In Synechocystis sp. (strain ATCC 27184 / PCC 6803 / Kazusa), this protein is Na(+)/H(+) antiporter NhaS5 (nhaS5).